Consider the following 162-residue polypeptide: Protein FAM162B (162 aa).

The tract at residues Glu26–Pro69 is disordered. The helical transmembrane segment at Val107 to Ser127 threads the bilayer.

The protein belongs to the UPF0389 family.

The protein resides in the membrane. The sequence is that of Protein FAM162B (FAM162B) from Homo sapiens (Human).